A 1305-amino-acid polypeptide reads, in one-letter code: Contactin-associated protein like 5-1 (1305 aa).

An N-terminal signal peptide occupies residues Met-1–Thr-24. In terms of domain architecture, F5/8 type C spans Ala-25–Cys-174. 2 Laminin G-like domains span residues Val-180–Cys-360 and Pro-367–Cys-544. An N-linked (GlcNAc...) asparagine glycan is attached at Asn-282. Cys-329 and Cys-360 are oxidised to a cystine. N-linked (GlcNAc...) asparagine glycosylation occurs at Asn-496. 3 disulfides stabilise this stretch: Cys-512–Cys-544, Cys-550–Cys-561, and Cys-555–Cys-570. Residues Ile-546–His-583 enclose the EGF-like 1 domain. The N-linked (GlcNAc...) asparagine glycan is linked to Asn-571. The cysteines at positions 572 and 582 are disulfide-linked. Residues Asp-584–Trp-790 form the Fibrinogen C-terminal domain. A glycan (N-linked (GlcNAc...) asparagine) is linked at Asn-622. Residues Asn-791–Cys-956 form the Laminin G-like 3 domain. Intrachain disulfides connect Cys-929/Cys-956, Cys-960/Cys-973, Cys-967/Cys-982, and Cys-984/Cys-994. The EGF-like 2 domain maps to Pro-957–Gln-995. The region spanning Glu-1014–Cys-1198 is the Laminin G-like 4 domain. N-linked (GlcNAc...) asparagine glycosylation is present at Asn-1057. Cys-1163 and Cys-1198 are oxidised to a cystine. Residues Val-1238–Ile-1258 traverse the membrane as a helical segment.

Belongs to the neurexin family.

It is found in the membrane. Functionally, may play a role in the correct development and proper functioning of the peripheral and central nervous system and be involved in cell adhesion and intercellular communication. The chain is Contactin-associated protein like 5-1 (Cntnap5a) from Rattus norvegicus (Rat).